We begin with the raw amino-acid sequence, 486 residues long: Glutamyl-tRNA(Gln) amidotransferase subunit A (486 aa).

Residues K78 and S153 each act as charge relay system in the active site. S177 functions as the Acyl-ester intermediate in the catalytic mechanism.

This sequence belongs to the amidase family. GatA subfamily. Heterotrimer of A, B and C subunits.

It catalyses the reaction L-glutamyl-tRNA(Gln) + L-glutamine + ATP + H2O = L-glutaminyl-tRNA(Gln) + L-glutamate + ADP + phosphate + H(+). Allows the formation of correctly charged Gln-tRNA(Gln) through the transamidation of misacylated Glu-tRNA(Gln) in organisms which lack glutaminyl-tRNA synthetase. The reaction takes place in the presence of glutamine and ATP through an activated gamma-phospho-Glu-tRNA(Gln). The chain is Glutamyl-tRNA(Gln) amidotransferase subunit A from Ruminiclostridium cellulolyticum (strain ATCC 35319 / DSM 5812 / JCM 6584 / H10) (Clostridium cellulolyticum).